The primary structure comprises 212 residues: Pyridoxine/pyridoxamine 5'-phosphate oxidase (212 aa).

Substrate-binding positions include 8–11 (RREY) and Lys66. Residues 61-66 (RIVLLK), 76-77 (FT), Arg82, Lys83, and Gln105 contribute to the FMN site. The substrate site is built by Tyr123, Arg127, and Ser131. FMN contacts are provided by residues 140 to 141 (QS) and Trp185. 191–193 (RLH) serves as a coordination point for substrate. Residue Arg195 coordinates FMN.

Belongs to the pyridoxamine 5'-phosphate oxidase family. As to quaternary structure, homodimer. FMN is required as a cofactor.

It carries out the reaction pyridoxamine 5'-phosphate + O2 + H2O = pyridoxal 5'-phosphate + H2O2 + NH4(+). The enzyme catalyses pyridoxine 5'-phosphate + O2 = pyridoxal 5'-phosphate + H2O2. It participates in cofactor metabolism; pyridoxal 5'-phosphate salvage; pyridoxal 5'-phosphate from pyridoxamine 5'-phosphate: step 1/1. It functions in the pathway cofactor metabolism; pyridoxal 5'-phosphate salvage; pyridoxal 5'-phosphate from pyridoxine 5'-phosphate: step 1/1. Functionally, catalyzes the oxidation of either pyridoxine 5'-phosphate (PNP) or pyridoxamine 5'-phosphate (PMP) into pyridoxal 5'-phosphate (PLP). The sequence is that of Pyridoxine/pyridoxamine 5'-phosphate oxidase from Shewanella sp. (strain ANA-3).